A 31-amino-acid chain; its full sequence is Cytochrome b6-f complex subunit 6 (31 aa).

The chain crosses the membrane as a helical span at residues 4–24 (LLSYFGFLFAILTLTSVLFIG).

It belongs to the PetL family. The 4 large subunits of the cytochrome b6-f complex are cytochrome b6, subunit IV (17 kDa polypeptide, PetD), cytochrome f and the Rieske protein, while the 4 small subunits are PetG, PetL, PetM and PetN. The complex functions as a dimer.

Its subcellular location is the plastid. The protein localises to the chloroplast thylakoid membrane. Component of the cytochrome b6-f complex, which mediates electron transfer between photosystem II (PSII) and photosystem I (PSI), cyclic electron flow around PSI, and state transitions. PetL is important for photoautotrophic growth as well as for electron transfer efficiency and stability of the cytochrome b6-f complex. The sequence is that of Cytochrome b6-f complex subunit 6 from Angiopteris evecta (Mule's foot fern).